Here is a 525-residue protein sequence, read N- to C-terminus: Serine protease 1 (525 aa).

Positions 1–32 (MKCKKPSALFSALALVGALGAASVLGAASANS) are cleaved as a signal peptide. Positions 33–211 (ASPVAAATVQ…TVSDDVIVPV (179 aa)) are excised as a propeptide. A disulfide bridge links Cys-223 with Cys-239. Residues His-238 and Asp-270 each act as charge relay system in the active site. 5 cysteine pairs are disulfide-bonded: Cys-310–Cys-320, Cys-346–Cys-376, Cys-412–Cys-431, Cys-453–Cys-472, and Cys-496–Cys-514. Ser-352 serves as the catalytic Charge relay system. The 130-residue stretch at 396 to 525 (TSTDVTTSYV…GGANQKWWRR (130 aa)) folds into the Ricin B-type lectin domain. Residues 401 to 525 (TTSYVQGYQN…GGANQKWWRR (125 aa)) are essential for the lytic activity, but not for protease function.

It belongs to the peptidase S1 family.

The protein resides in the secreted. Major serine protease exhibiting lytic activity toward living yeast cells. Similar to elastase in its substrate specificity and has a lectin-like affinity for mannose. Mannoproteins may be the native substrate for RPI. The protein is Serine protease 1 of Rarobacter faecitabidus.